The following is a 350-amino-acid chain: LIM domain-containing protein unc-95 (350 aa).

Residues 1–37 show a composition bias toward polar residues; that stretch reads MTISPQPSHQQFESYQWTTESRSSQQRHGTGTPSQDG. The disordered stretch occupies residues 1–65; the sequence is MTISPQPSHQ…ESRNSNKDKV (65 aa). Residues 45 to 65 are compositionally biased toward basic and acidic residues; the sequence is PVERHVARWRSESRNSNKDKV. A coiled-coil region spans residues 83–110; it reads LTALKNDVEQTTEIIRRKQEQMRMERRQ. 3 disordered regions span residues 177–198, 206–225, and 235–262; these read RRGQ…EIEY, PEEQ…METD, and MSEE…SGSP. In terms of domain architecture, LIM zinc-binding spans 268–334; the sequence is AVCAYCSEEI…HDCFYKLYNG (67 aa).

Ubiquitinated. Ubiquitination by rnf-5 leads to dissociation from muscle dense bodies during molting and is required for ecdysis. In terms of tissue distribution, expressed in the body wall muscles, vulval muscles and the anal muscles. Expressed in the muscle arms of the head muscle cells that form neuromuscular junctions and in the anal depressor muscle.

Its subcellular location is the cytoplasm. It localises to the nucleus. The protein localises to the cell membrane. It is found in the myofibril. The protein resides in the sarcomere. Its subcellular location is the m line. It localises to the cell junction. The protein localises to the focal adhesion. Its function is as follows. Required for the assembly and integrity of muscle dense bodies, which establish the adhesion sites of the muscle cells to the extracellular matrix. Decreased localization of unc-95 to dense bodies and their subsequent dissociation plays an important role in ecdysis during molting. Involved in the organization of the muscle sarcomeric structure and thereby required for locomotion. The sequence is that of LIM domain-containing protein unc-95 from Caenorhabditis elegans.